The chain runs to 266 residues: 3-methyl-2-oxobutanoate hydroxymethyltransferase 2 (266 aa).

Mg(2+) is bound by residues aspartate 45 and aspartate 84. 3-methyl-2-oxobutanoate is bound by residues 45–46, aspartate 84, and lysine 112; that span reads DS. Residue glutamate 114 participates in Mg(2+) binding. Glutamate 181 serves as the catalytic Proton acceptor.

This sequence belongs to the PanB family. As to quaternary structure, homodecamer; pentamer of dimers. Mg(2+) serves as cofactor.

The protein localises to the cytoplasm. The catalysed reaction is 3-methyl-2-oxobutanoate + (6R)-5,10-methylene-5,6,7,8-tetrahydrofolate + H2O = 2-dehydropantoate + (6S)-5,6,7,8-tetrahydrofolate. Its pathway is cofactor biosynthesis; (R)-pantothenate biosynthesis; (R)-pantoate from 3-methyl-2-oxobutanoate: step 1/2. Functionally, catalyzes the reversible reaction in which hydroxymethyl group from 5,10-methylenetetrahydrofolate is transferred onto alpha-ketoisovalerate to form ketopantoate. This is 3-methyl-2-oxobutanoate hydroxymethyltransferase 2 from Pseudomonas aeruginosa (strain ATCC 15692 / DSM 22644 / CIP 104116 / JCM 14847 / LMG 12228 / 1C / PRS 101 / PAO1).